A 560-amino-acid polypeptide reads, in one-letter code: Calnexin homolog (560 aa).

The first 22 residues, 1 to 22 (MKYGKVSFLALLCSLYVRGSLA), serve as a signal peptide directing secretion. The Lumenal segment spans residues 23–489 (DPESEQEPLV…ETIIETPEIG (467 aa)). Cys132 and Cys163 are joined by a disulfide. An alpha-D-glucoside is bound by residues Tyr136, Lys138, Tyr154, and Asp161. The tract at residues 242–375 (IYDPEDIKPA…RKIPNPDYFD (134 aa)) is p domain (Extended arm). Tandem repeats lie at residues 244–255 (DPEDIKPADWVD), 261–272 (DPNAVKPDDWDE), 280–291 (DPDAVKPEDWLE), 299–310 (DPEAQKPEDWDD), and 314–324 (GDWIPSEIINP). 4 X approximate repeats stretches follow at residues 244 to 310 (DPED…DWDD) and 314 to 371 (GDWI…IPNP). Residues 253-273 (WVDEPEIPDPNAVKPDDWDED) are disordered. The cysteines at positions 326 and 332 are disulfide-linked. A run of 3 repeats spans residues 333-343 (GEWKPPMIRNP), 347-357 (GPWSPPMIPNP), and 361-371 (GEWYPRKIPNP). An an alpha-D-glucoside-binding site is contributed by Glu391. Asn418 is a glycosylation site (N-linked (GlcNAc...) asparagine). A helical transmembrane segment spans residues 490-512 (IAIVAVLGSLTAVILTCYFYFFA). The Cytoplasmic portion of the chain corresponds to 513-560 (SSSPASLSTGTTEAEKEQQEKFKQETETEKIDVSYAPETESPTAKNED). Residues 517 to 560 (ASLSTGTTEAEKEQQEKFKQETETEKIDVSYAPETESPTAKNED) are disordered. Residues 525-544 (EAEKEQQEKFKQETETEKID) show a composition bias toward basic and acidic residues. A Phosphothreonine modification is found at Thr551. Position 553 is a phosphoserine (Ser553). Thr555 carries the post-translational modification Phosphothreonine.

This sequence belongs to the calreticulin family.

It localises to the endoplasmic reticulum membrane. Calcium-binding protein that interacts with newly synthesized monoglucosylated glycoproteins in the endoplasmic reticulum. It may act in assisting protein assembly and/or in the retention within the ER of unassembled protein subunits. It seems to play a major role in the quality control apparatus of the ER by the retention of incorrectly folded proteins. The chain is Calnexin homolog (cal1) from Schizosaccharomyces pombe (strain 972 / ATCC 24843) (Fission yeast).